We begin with the raw amino-acid sequence, 474 residues long: Eukaryotic translation initiation factor 3 subunit L (474 aa).

The PCI domain occupies 255-449; the sequence is DAIRMFSHIL…DLDYALQGDL (195 aa).

This sequence belongs to the eIF-3 subunit L family. As to quaternary structure, component of the eukaryotic translation initiation factor 3 (eIF-3) complex.

It is found in the cytoplasm. In terms of biological role, component of the eukaryotic translation initiation factor 3 (eIF-3) complex, which is involved in protein synthesis of a specialized repertoire of mRNAs and, together with other initiation factors, stimulates binding of mRNA and methionyl-tRNAi to the 40S ribosome. The eIF-3 complex specifically targets and initiates translation of a subset of mRNAs involved in cell proliferation. In Neurospora crassa (strain ATCC 24698 / 74-OR23-1A / CBS 708.71 / DSM 1257 / FGSC 987), this protein is Eukaryotic translation initiation factor 3 subunit L.